The chain runs to 64 residues: Endodeoxyribonuclease toxin RalR (64 aa).

Ca(2+) is required as a cofactor. Requires Mg(2+) as cofactor.

Its activity is regulated as follows. Inhibited by EDTA. Functionally, toxic component of a type I toxin-antitoxin (TA) system. Upon overexpression inhibits growth and reduces colony-forming units in both the presence and absence of the Rac prophage, cells become filamentous. Has deoxyribonuclease activity (probably endonucleolytic), does not digest RNA. Its toxic effects are neutralized by sRNA antitoxin RalA, which is encoded in trans on the opposite DNA strand. Has RAL-like activity. This is Endodeoxyribonuclease toxin RalR (ralR) from Escherichia coli (strain K12).